Here is a 343-residue protein sequence, read N- to C-terminus: Heat-inducible transcription repressor HrcA (343 aa).

It belongs to the HrcA family.

Its function is as follows. Negative regulator of class I heat shock genes (grpE-dnaK-dnaJ and groELS operons). Prevents heat-shock induction of these operons. The sequence is that of Heat-inducible transcription repressor HrcA from Mycobacterium marinum (strain ATCC BAA-535 / M).